Consider the following 104-residue polypeptide: N(2)-fixation sustaining protein CowN (104 aa).

This sequence belongs to the CowN family.

Is required to sustain N(2)-dependent growth in the presence of low levels of carbon monoxide (CO). Probably acts by protecting the N(2) fixation ability of the nitrogenase complex, which is inactivated in the presence of CO. The sequence is that of N(2)-fixation sustaining protein CowN from Arcobacter nitrofigilis (strain ATCC 33309 / DSM 7299 / CCUG 15893 / LMG 7604 / NCTC 12251 / CI) (Campylobacter nitrofigilis).